A 225-amino-acid chain; its full sequence is MLSTLIKKLKIKPKQISLYKMSITHSSYANENKLKKKDNERLEFLGDAVINLLMADYLYTKKEKENEGFMSKKRAQSVCEDSLVIYAKSIQLQNYILLGKGEKNKNINNSILANAFEALFGAIYLDLGYYIAKKVFILIVIPRLSNIIDNIDFKTQLQELVQSQKKTISYYITEEKGLDHSKEFTAEVFLEKKNVGRGFGKTKKSAEQDAARYVLNILSKGEKND.

Residues 2–128 (LSTLIKKLKI…LFGAIYLDLG (127 aa)) form the RNase III domain. E43 contacts Mg(2+). Residue D47 is part of the active site. Residues N114 and E117 each contribute to the Mg(2+) site. The active site involves E117. One can recognise a DRBM domain in the interval 152–220 (DFKTQLQELV…ARYVLNILSK (69 aa)).

The protein belongs to the ribonuclease III family. Homodimer. Mg(2+) is required as a cofactor.

The protein resides in the cytoplasm. The catalysed reaction is Endonucleolytic cleavage to 5'-phosphomonoester.. Functionally, digests double-stranded RNA. Involved in the processing of primary rRNA transcript to yield the immediate precursors to the large and small rRNAs (23S and 16S). Processes some mRNAs, and tRNAs when they are encoded in the rRNA operon. Processes pre-crRNA and tracrRNA of type II CRISPR loci if present in the organism. This chain is Ribonuclease 3, found in Phytoplasma mali (strain AT).